The primary structure comprises 462 residues: Argininosuccinate lyase (462 aa).

This sequence belongs to the lyase 1 family. Argininosuccinate lyase subfamily.

Its subcellular location is the cytoplasm. It catalyses the reaction 2-(N(omega)-L-arginino)succinate = fumarate + L-arginine. It participates in amino-acid biosynthesis; L-arginine biosynthesis; L-arginine from L-ornithine and carbamoyl phosphate: step 3/3. This chain is Argininosuccinate lyase, found in Bacillus cereus (strain ZK / E33L).